We begin with the raw amino-acid sequence, 515 residues long: Bifunctional purine biosynthesis protein PurH (515 aa).

Residues 1–145 enclose the MGS-like domain; it reads MTKRALISVS…KNHASVTVVV (145 aa).

Belongs to the PurH family.

The catalysed reaction is (6R)-10-formyltetrahydrofolate + 5-amino-1-(5-phospho-beta-D-ribosyl)imidazole-4-carboxamide = 5-formamido-1-(5-phospho-D-ribosyl)imidazole-4-carboxamide + (6S)-5,6,7,8-tetrahydrofolate. It carries out the reaction IMP + H2O = 5-formamido-1-(5-phospho-D-ribosyl)imidazole-4-carboxamide. Its pathway is purine metabolism; IMP biosynthesis via de novo pathway; 5-formamido-1-(5-phospho-D-ribosyl)imidazole-4-carboxamide from 5-amino-1-(5-phospho-D-ribosyl)imidazole-4-carboxamide (10-formyl THF route): step 1/1. It functions in the pathway purine metabolism; IMP biosynthesis via de novo pathway; IMP from 5-formamido-1-(5-phospho-D-ribosyl)imidazole-4-carboxamide: step 1/1. The protein is Bifunctional purine biosynthesis protein PurH of Streptococcus gordonii (strain Challis / ATCC 35105 / BCRC 15272 / CH1 / DL1 / V288).